Here is a 312-residue protein sequence, read N- to C-terminus: Porphobilinogen deaminase (312 aa).

The residue at position 243 (Cys-243) is an S-(dipyrrolylmethanemethyl)cysteine.

Belongs to the HMBS family. As to quaternary structure, monomer. Dipyrromethane is required as a cofactor.

The enzyme catalyses 4 porphobilinogen + H2O = hydroxymethylbilane + 4 NH4(+). It participates in porphyrin-containing compound metabolism; protoporphyrin-IX biosynthesis; coproporphyrinogen-III from 5-aminolevulinate: step 2/4. Functionally, tetrapolymerization of the monopyrrole PBG into the hydroxymethylbilane pre-uroporphyrinogen in several discrete steps. This is Porphobilinogen deaminase from Vibrio campbellii (strain ATCC BAA-1116).